The sequence spans 461 residues: Argininosuccinate lyase (461 aa).

It belongs to the lyase 1 family. Argininosuccinate lyase subfamily.

The protein localises to the cytoplasm. The enzyme catalyses 2-(N(omega)-L-arginino)succinate = fumarate + L-arginine. It participates in amino-acid biosynthesis; L-arginine biosynthesis; L-arginine from L-ornithine and carbamoyl phosphate: step 3/3. This Dehalococcoides mccartyi (strain ATCC BAA-2100 / JCM 16839 / KCTC 5957 / BAV1) protein is Argininosuccinate lyase.